Reading from the N-terminus, the 145-residue chain is Phospholipase A2, membrane associated (145 aa).

A signal peptide spans 1-20 (MKLLLLLLVVMASDLPQAHG). 7 disulfide bridges follow: Cys-46/Cys-138, Cys-48/Cys-64, Cys-63/Cys-118, Cys-69/Cys-145, Cys-70/Cys-111, Cys-79/Cys-104, and Cys-97/Cys-109. Ca(2+) is bound by residues His-47, Gly-49, and Gly-51. The active site involves His-67. Asp-68 serves as a coordination point for Ca(2+). The active site involves Asp-112.

This sequence belongs to the phospholipase A2 family. Requires Ca(2+) as cofactor. In terms of tissue distribution, alveolar macrophages, and at much lower levels in peripheral blood monocytes and peritoneal macrophages.

Its subcellular location is the secreted. The protein localises to the cell membrane. The protein resides in the mitochondrion outer membrane. It catalyses the reaction a 1,2-diacyl-sn-glycero-3-phosphoethanolamine + H2O = a 1-acyl-sn-glycero-3-phosphoethanolamine + a fatty acid + H(+). The enzyme catalyses 1-hexadecanoyl-2-(9Z-octadecenoyl)-sn-glycero-3-phosphoethanolamine + H2O = 1-hexadecanoyl-sn-glycero-3-phosphoethanolamine + (9Z)-octadecenoate + H(+). The catalysed reaction is 1-hexadecanoyl-2-(9Z,12Z-octadecadienoyl)-sn-glycero-3-phosphoethanolamine + H2O = 1-hexadecanoyl-sn-glycero-3-phosphoethanolamine + (9Z,12Z)-octadecadienoate + H(+). It carries out the reaction 1-hexadecanoyl-2-(5Z,8Z,11Z,14Z-eicosatetraenoyl)-sn-glycero-3-phosphoethanolamine + H2O = 1-hexadecanoyl-sn-glycero-3-phosphoethanolamine + (5Z,8Z,11Z,14Z)-eicosatetraenoate + H(+). It catalyses the reaction N-hexadecanoyl-1,2-di-(9Z-octadecenoyl)-sn-glycero-3-phosphoethanolamine + H2O = N-hexadecanoyl-1-(9Z-octadecenoyl)-sn-glycero-3-phosphoethanolamine + (9Z)-octadecenoate + H(+). The enzyme catalyses 1,2-dihexadecanoyl-sn-glycero-3-phospho-(1'-sn-glycerol) + H2O = 1-hexadecanoyl-sn-glycero-3-phospho-(1'-sn-glycerol) + hexadecanoate + H(+). The catalysed reaction is 1-hexadecanoyl-2-(9Z-octadecenoyl)-sn-glycero-3-phosphoglycerol + H2O = 1-hexadecanoyl-sn-glycero-3-phosphoglycerol + (9Z)-octadecenoate + H(+). It carries out the reaction 1-hexadecanoyl-2-(9Z-octadecenoyl)-sn-glycero-3-phospho-(1'-sn-glycerol) + H2O = 1-hexadecanoyl-sn-glycero-3-phospho-(1'-sn-glycerol) + (9Z)-octadecenoate + H(+). It catalyses the reaction a 1,2-diacyl-sn-glycero-3-phosphocholine + H2O = a 1-acyl-sn-glycero-3-phosphocholine + a fatty acid + H(+). The enzyme catalyses 1,2-dihexadecanoyl-sn-glycero-3-phosphocholine + H2O = 1-hexadecanoyl-sn-glycero-3-phosphocholine + hexadecanoate + H(+). The catalysed reaction is 1-hexadecanoyl-2-(9Z-octadecenoyl)-sn-glycero-3-phosphocholine + H2O = 1-hexadecanoyl-sn-glycero-3-phosphocholine + (9Z)-octadecenoate + H(+). It carries out the reaction 1-hexadecanoyl-2-(9Z,12Z-octadecadienoyl)-sn-glycero-3-phosphocholine + H2O = (9Z,12Z)-octadecadienoate + 1-hexadecanoyl-sn-glycero-3-phosphocholine + H(+). It catalyses the reaction 1-hexadecanoyl-2-(4Z,7Z,10Z,13Z,16Z,19Z-docosahexaenoyl)-sn-glycero-3-phosphocholine + H2O = (4Z,7Z,10Z,13Z,16Z,19Z)-docosahexaenoate + 1-hexadecanoyl-sn-glycero-3-phosphocholine + H(+). Its function is as follows. Secretory calcium-dependent phospholipase A2 that primarily targets extracellular phospholipids with implications in host antimicrobial defense, inflammatory response and tissue regeneration. Hydrolyzes the ester bond of the fatty acyl group attached at sn-2 position of phospholipids (phospholipase A2 activity) with preference for phosphatidylethanolamines and phosphatidylglycerols over phosphatidylcholines. Contributes to lipid remodeling of cellular membranes and generation of lipid mediators involved in pathogen clearance. Displays bactericidal activity against Gram-positive bacteria by directly hydrolyzing phospholipids of the bacterial membrane. Upon sterile inflammation, targets membrane phospholipids of extracellular mitochondria released from activated platelets, generating free unsaturated fatty acids such as arachidonate that is used by neighboring leukocytes to synthesize inflammatory eicosanoids such as leukotrienes. Simultaneously, by compromising mitochondrial membrane integrity, promotes the release in circulation of potent damage-associated molecular pattern molecules that activate the innate immune response. Plays a stem cell regulator role in the intestinal crypt. Within intracellular compartment mediates Paneth cell differentiation and its stem cell supporting functions by inhibiting Wnt signaling pathway in intestinal stem cell (ICS). Secreted in the intestinal lumen upon inflammation, acts in an autocrine way and promotes prostaglandin E2 synthesis that stimulates Wnt signaling pathway in ICS cells and tissue regeneration. May play a role in the biosynthesis of N-acyl ethanolamines that regulate energy metabolism and inflammation. Hydrolyzes N-acyl phosphatidylethanolamines to N-acyl lysophosphatidylethanolamines, which are further cleaved by a lysophospholipase D to release N-acyl ethanolamines. Independent of its catalytic activity, acts as a ligand for integrins. Binds to and activates integrins ITGAV:ITGB3, ITGA4:ITGB1 and ITGA5:ITGB1. Binds to a site (site 2) which is distinct from the classical ligand-binding site (site 1) and induces integrin conformational changes and enhanced ligand binding to site 1. Induces cell proliferation in an integrin-dependent manner. This is Phospholipase A2, membrane associated (PLA2G2A) from Cavia porcellus (Guinea pig).